Reading from the N-terminus, the 578-residue chain is MSHQERIASQRRTTAEVPMHRSTANQSKRSRSPFASTRRRWDDSESSGASLAVESEDYSRYPPREYRASGSRRGLAYGHIDTVVARDSEEEGAGPVDRLPVRGKAGKFKDDPEKGARSSRFTSVNHDAKEECGKVESPPAARCSARRAELSKQNGSSASQISSAEGRAAAKGNNSLERERQNLPARPSRAPVSICGGGENTPKSAEEPVVRPKVRNVATPNCMKPKVFFDTDDDDDVPHSTSRWRDAADAEEAHAEGLARRGRGEAASSSEPRYAEDQDARSEQAKADKVPRRRRTMADPDFWAYTDDYYRYYEEDSDSDKEWMAALRRKYRSREQPQSSSGESWELLPGKEELERQQAGAGSLASAGSNGSGYPEEVQDPSLQEEEQASLEEGEIPWLRYNENESSSEGDNESTHELIQPGMFMLDGNNNLEDDSSVSEDLEVDWSLFDGFADGLGVAEAISYVDPQFLTYMALEERLAQAMETALAHLESLAVDVEVANPPASKESIDALPEILVTEDHGAVGQEMCCPICCSEYVKGEVATELPCHHYFHKPCVSIWLQKSGTCPVCRCMFPPPL.

Residues 1–298 are disordered; sequence MSHQERIASQ…KVPRRRRTMA (298 aa). 2 stretches are compositionally biased toward basic and acidic residues: residues 57 to 67 and 107 to 116; these read DYSRYPPREYR and KFKDDPEKGA. The segment covering 151–163 has biased composition (polar residues); that stretch reads SKQNGSSASQISS. Threonine 231 bears the Phosphothreonine mark. Basic and acidic residues-rich tracts occupy residues 243-264 and 273-290; these read RWRDAADAEEAHAEGLARRGRG and RYAEDQDARSEQAKADKV. A phosphoserine mark is found at serine 317 and serine 319. Residues 332–397 are disordered; that stretch reads RSREQPQSSS…QASLEEGEIP (66 aa). Residues 359–373 are compositionally biased toward low complexity; sequence AGAGSLASAGSNGSG. Positions 377 to 395 are enriched in acidic residues; sequence EVQDPSLQEEEQASLEEGE. The RING-type zinc finger occupies 530–571; sequence CPICCSEYVKGEVATELPCHHYFHKPCVSIWLQKSGTCPVCR.

In terms of assembly, binds ubiquitin-conjugating enzymes (E2s). Binds, in vitro and in vivo, the MAGE conserved domain of MAGED1. Binds weakly Necdin, in vitro. Interacts with UBE2D2. In terms of processing, substrate for E2-dependent ubiquitination. As to expression, expressed in brain, liver, kidney. Highest levels in brain where it is found in many regions including cortical and subcortical areas and in neurons of the amygdala. Weak expression also found in testis. Also expressed in developing embryo.

The catalysed reaction is S-ubiquitinyl-[E2 ubiquitin-conjugating enzyme]-L-cysteine + [acceptor protein]-L-lysine = [E2 ubiquitin-conjugating enzyme]-L-cysteine + N(6)-ubiquitinyl-[acceptor protein]-L-lysine.. In terms of biological role, has E2-dependent E3 ubiquitin-protein ligase activity. Ubiquitinates MAGED1 antigen leading to its subsequent degradation by proteasome. May be involved in protein sorting. The polypeptide is E3 ubiquitin-protein ligase Praja-1 (Pja1) (Mus musculus (Mouse)).